Consider the following 79-residue polypeptide: Sec-independent protein translocase protein TatA (79 aa).

Residues 1–21 (MGSLSIWHWLIVLLIVALVFG) traverse the membrane as a helical segment. The segment at 46 to 79 (ADAPAAEAQQRELPRNGAVDVEAKEKTPRSGDYR) is disordered. Residues 66 to 79 (VEAKEKTPRSGDYR) show a composition bias toward basic and acidic residues.

Belongs to the TatA/E family. The Tat system comprises two distinct complexes: a TatABC complex, containing multiple copies of TatA, TatB and TatC subunits, and a separate TatA complex, containing only TatA subunits. Substrates initially bind to the TatABC complex, which probably triggers association of the separate TatA complex to form the active translocon.

Its subcellular location is the cell inner membrane. Functionally, part of the twin-arginine translocation (Tat) system that transports large folded proteins containing a characteristic twin-arginine motif in their signal peptide across membranes. TatA could form the protein-conducting channel of the Tat system. This Paraburkholderia phytofirmans (strain DSM 17436 / LMG 22146 / PsJN) (Burkholderia phytofirmans) protein is Sec-independent protein translocase protein TatA.